A 196-amino-acid polypeptide reads, in one-letter code: Small heat shock protein C3 (196 aa).

Residues 88 to 196 (SAYSSSAIRT…EKDAKEIPIQ (109 aa)) form the sHSP domain.

It belongs to the small heat shock protein (HSP20) family.

The sequence is that of Small heat shock protein C3 (hspc3-1) from Rickettsia felis (strain ATCC VR-1525 / URRWXCal2) (Rickettsia azadi).